A 100-amino-acid polypeptide reads, in one-letter code: Urease subunit gamma (100 aa).

The protein belongs to the urease gamma subunit family. In terms of assembly, heterotrimer of UreA (gamma), UreB (beta) and UreC (alpha) subunits. Three heterotrimers associate to form the active enzyme.

It localises to the cytoplasm. The enzyme catalyses urea + 2 H2O + H(+) = hydrogencarbonate + 2 NH4(+). It participates in nitrogen metabolism; urea degradation; CO(2) and NH(3) from urea (urease route): step 1/1. In Burkholderia thailandensis (strain ATCC 700388 / DSM 13276 / CCUG 48851 / CIP 106301 / E264), this protein is Urease subunit gamma.